A 145-amino-acid chain; its full sequence is Large ribosomal subunit protein uL14m (145 aa).

The N-terminal 30 residues, 1-30 (MAFFTGLWGPFTCVSRVLSHHCFSTTGSLS), are a transit peptide targeting the mitochondrion.

It belongs to the universal ribosomal protein uL14 family. As to quaternary structure, component of the mitochondrial large ribosomal subunit (mt-LSU). Mature mammalian 55S mitochondrial ribosomes consist of a small (28S) and a large (39S) subunit. The 28S small subunit contains a 12S ribosomal RNA (12S mt-rRNA) and 30 different proteins. The 39S large subunit contains a 16S rRNA (16S mt-rRNA), a copy of mitochondrial valine transfer RNA (mt-tRNA(Val)), which plays an integral structural role, and 52 different proteins. Interacts with MALSU1.

It localises to the mitochondrion. Its function is as follows. Forms part of 2 intersubunit bridges in the assembled ribosome. Upon binding to MALSU1 intersubunit bridge formation is blocked, preventing ribosome formation and repressing translation. The chain is Large ribosomal subunit protein uL14m (MRPL14) from Homo sapiens (Human).